Consider the following 492-residue polypeptide: Cobyric acid synthase (492 aa).

The region spanning 259 to 453 (HTTVAVVAYP…LHGLFEDAVA (195 aa)) is the GATase cobBQ-type domain. The active-site Nucleophile is Cys340. The active site involves His445.

Belongs to the CobB/CobQ family. CobQ subfamily.

It functions in the pathway cofactor biosynthesis; adenosylcobalamin biosynthesis. Its function is as follows. Catalyzes amidations at positions B, D, E, and G on adenosylcobyrinic A,C-diamide. NH(2) groups are provided by glutamine, and one molecule of ATP is hydrogenolyzed for each amidation. In Paracidovorax citrulli (strain AAC00-1) (Acidovorax citrulli), this protein is Cobyric acid synthase.